The sequence spans 136 residues: Protein NrdI (136 aa).

This sequence belongs to the NrdI family.

In terms of biological role, probably involved in ribonucleotide reductase function. The sequence is that of Protein NrdI from Salmonella typhi.